We begin with the raw amino-acid sequence, 1328 residues long: Protein turtle homolog B (1328 aa).

The first 17 residues, methionine 1 to glycine 17, serve as a signal peptide directing secretion. Over leucine 18–proline 722 the chain is Extracellular. 5 Ig-like domains span residues proline 30 to valine 115, proline 139 to glutamine 226, proline 228 to threonine 320, proline 324 to valine 415, and proline 420 to threonine 504. 2 disulfide bridges follow: cysteine 45–cysteine 113 and cysteine 161–cysteine 208. N-linked (GlcNAc...) asparagine glycosylation is found at asparagine 241 and asparagine 258. Disulfide bonds link cysteine 250-cysteine 303, cysteine 346-cysteine 397, and cysteine 442-cysteine 488. Fibronectin type-III domains are found at residues alanine 512–phenylalanine 604 and leucine 614–isoleucine 708. A glycan (N-linked (GlcNAc...) asparagine) is linked at asparagine 624. Residues valine 723–leucine 743 traverse the membrane as a helical segment. At alanine 744–glycine 1328 the chain is on the cytoplasmic side. Disordered regions lie at residues arginine 758–leucine 817, proline 914–tryptophan 1040, and lysine 1106–glycine 1328. Phosphoserine occurs at positions 775, 783, and 794. A compositionally biased stretch (low complexity) spans serine 990 to leucine 1001. 3 stretches are compositionally biased toward polar residues: residues glutamate 1018–glycine 1033, leucine 1129–glycine 1141, and serine 1199–glycine 1214. Omega-N-methylarginine is present on arginine 1136. A phosphoserine mark is found at serine 1207 and serine 1215. A compositionally biased stretch (low complexity) spans serine 1246–threonine 1273. Composition is skewed to pro residues over residues proline 1284–proline 1295 and proline 1318–glycine 1328.

Belongs to the immunoglobulin superfamily. Turtle family. As to quaternary structure, found in a complex with MAGI2 and NLGN2, where it interacts with MAGI2 (via PDZ 5 and PDZ 6 domains). Post-translationally, N-glycosylated and sialylated. Not significantly O-glycosylated. As to expression, detected in brain.

It is found in the cell membrane. The protein localises to the postsynaptic cell membrane. Its subcellular location is the postsynaptic density. In terms of biological role, transmembrane protein which is abundantly expressed in interneurons, where it may regulate inhibitory synapse development. May mediate homophilic cell adhesion. This is Protein turtle homolog B from Mus musculus (Mouse).